Consider the following 450-residue polypeptide: Serine incorporator 2 (450 aa).

Helical transmembrane passes span 5-27 (LGAC…ILCG), 40-57 (LLFT…IIML), 96-118 (AVYR…MICV), 131-150 (GFWF…AFYI), 160-182 (FYFG…VDFA), 203-225 (AGLF…LMFV), 238-257 (VFIS…AVLP), 264-286 (PNSG…WSAL), 315-337 (VWWD…FISL), 380-402 (TYSY…MTLT), and 417-439 (WTSV…WTLV).

The protein belongs to the TDE1 family.

The protein resides in the cell membrane. The enzyme catalyses a 1,2-diacyl-sn-glycero-3-phospho-L-serine(in) = a 1,2-diacyl-sn-glycero-3-phospho-L-serine(out). It carries out the reaction a 1,2-diacyl-sn-glycero-3-phosphocholine(in) = a 1,2-diacyl-sn-glycero-3-phosphocholine(out). It catalyses the reaction a 1,2-diacyl-sn-glycero-3-phosphoethanolamine(in) = a 1,2-diacyl-sn-glycero-3-phosphoethanolamine(out). Its function is as follows. Non-ATP-dependent, non-specific lipid transporter for phosphatidylserine, phosphatidylcholine, and phosphatidylethanolamine. Functions as a scramblase that flips lipids in both directions across the membrane. In contrast to SERINC3 and SERINC5, has no effect on gammaretrovirus particles infectivity. The sequence is that of Serine incorporator 2 (Serinc2) from Mus musculus (Mouse).